The chain runs to 78 residues: Mambalgin-1 (78 aa).

A signal peptide spans 1-21 (MKTLLLTLLVVTIVCLDLGYS). Intrachain disulfides connect cysteine 24-cysteine 40, cysteine 33-cysteine 58, cysteine 62-cysteine 70, and cysteine 71-cysteine 76.

It belongs to the three-finger toxin family. Short-chain subfamily. Mambalgin sub-subfamily. As to expression, expressed by the venom gland.

Its subcellular location is the secreted. In terms of biological role, this three-finger toxin inhibits ASIC channels. It acts as a gating modifier toxin by decreasing the apparent proton sensitivity of activation and by slightly increasing the apparent proton sensitivity for inactivation. It binds more tightly to the closed state and to a much lesser extent the inactivated/desensitized state of ASIC1a isoform of ASIC1. It interacts directly with the outside surface of the thumb domain of chicken ASIC1a (ASIC1a), but does not insert into the acidic pocket as suggested for mambalgin-2. This binding leads to relocation of the thumb domain that could disrupt the acidic pocket of cASIC1a. It reversibly inhibits rat ASIC1a (IC(50)=3.4-55 nM), rat ASIC1a-ASIC2b (IC(50)=61 nM), rat ASIC1a-ASIC1b (IC(50)=72 nM), human ASIC1a (IC(50)=127-580 nM), chicken ASIC1a (IC(50)=123.6 nM), rat ASIC1b (IC(50)=22.2-203 nM), rat ASIC1a-ASIC2a (IC(50)=152-252 nM). In vivo, it shows a potent naloxone-resistant analgesic effect against acute and inflammatory pain upon central and peripheral injection. In addition, it also has an opioid-independent effect on both thermal and mechanical inflammatory pain after systemic administration and is effective against neuropathic pain. In Dendroaspis polylepis polylepis (Black mamba), this protein is Mambalgin-1.